The chain runs to 284 residues: Polyamine aminopropyltransferase (284 aa).

The 235-residue stretch at 4–238 (EVWNTERLHD…GPMALGWGSH (235 aa)) folds into the PABS domain. Glutamine 33 serves as a coordination point for S-methyl-5'-thioadenosine. Spermidine is bound by residues histidine 64 and aspartate 88. S-methyl-5'-thioadenosine-binding positions include glutamate 108 and 140-141 (DG). The Proton acceptor role is filled by aspartate 158. Spermidine is bound at residue 158–161 (DSTD). Residue proline 165 coordinates S-methyl-5'-thioadenosine.

This sequence belongs to the spermidine/spermine synthase family. Homodimer or homotetramer.

The protein resides in the cytoplasm. It catalyses the reaction S-adenosyl 3-(methylsulfanyl)propylamine + putrescine = S-methyl-5'-thioadenosine + spermidine + H(+). Its pathway is amine and polyamine biosynthesis; spermidine biosynthesis; spermidine from putrescine: step 1/1. In terms of biological role, catalyzes the irreversible transfer of a propylamine group from the amino donor S-adenosylmethioninamine (decarboxy-AdoMet) to putrescine (1,4-diaminobutane) to yield spermidine. The chain is Polyamine aminopropyltransferase from Ruegeria sp. (strain TM1040) (Silicibacter sp.).